A 570-amino-acid polypeptide reads, in one-letter code: Proline--tRNA ligase (570 aa).

This sequence belongs to the class-II aminoacyl-tRNA synthetase family. ProS type 1 subfamily. In terms of assembly, homodimer.

It localises to the cytoplasm. It catalyses the reaction tRNA(Pro) + L-proline + ATP = L-prolyl-tRNA(Pro) + AMP + diphosphate. Functionally, catalyzes the attachment of proline to tRNA(Pro) in a two-step reaction: proline is first activated by ATP to form Pro-AMP and then transferred to the acceptor end of tRNA(Pro). As ProRS can inadvertently accommodate and process non-cognate amino acids such as alanine and cysteine, to avoid such errors it has two additional distinct editing activities against alanine. One activity is designated as 'pretransfer' editing and involves the tRNA(Pro)-independent hydrolysis of activated Ala-AMP. The other activity is designated 'posttransfer' editing and involves deacylation of mischarged Ala-tRNA(Pro). The misacylated Cys-tRNA(Pro) is not edited by ProRS. The chain is Proline--tRNA ligase from Syntrophomonas wolfei subsp. wolfei (strain DSM 2245B / Goettingen).